The sequence spans 496 residues: Beta-N-acetylhexosaminidase (496 aa).

The Proton donor role is filled by E298.

This sequence belongs to the glycosyl hydrolase 20 family.

The catalysed reaction is Hydrolysis of terminal non-reducing N-acetyl-D-hexosamine residues in N-acetyl-beta-D-hexosaminides.. The protein operates within glycan degradation; chitin degradation. Its function is as follows. Catalyzes the cleavage of beta-N-acetylglucosaminides and beta-N-acetylgalactosaminides. Also catalyzes the hydrolysis of N-acetylchitooligomers. May be involved in chitin degradation. It is not able to cleave beta-glucosides. The sequence is that of Beta-N-acetylhexosaminidase (hex20) from Cellulomonas fimi.